The chain runs to 1225 residues: Hyphally regulated cell wall protein 4 (1225 aa).

Residues 1–20 (MFSYSQAIRFIIFLLPICLT) form the signal peptide. Residues asparagine 97, asparagine 200, asparagine 488, asparagine 595, asparagine 634, and asparagine 694 are each glycosylated (N-linked (GlcNAc...) asparagine). The disordered stretch occupies residues 832–852 (DLDLPDDTTFTPSQSSSTTVP). A compositionally biased stretch (low complexity) spans 838–852 (DTTFTPSQSSSTTVP). Asparagine 933 and asparagine 1035 each carry an N-linked (GlcNAc...) asparagine glycan. Residues 1049–1114 (AYTQQDASTQ…NSHFEGTFIS (66 aa)) are disordered. 4 N-linked (GlcNAc...) asparagine glycosylation sites follow: asparagine 1133, asparagine 1150, asparagine 1182, and asparagine 1193. Serine 1195 carries GPI-anchor amidated serine lipidation. A propeptide spans 1196–1225 (GLISKSESVVLLIRPVMIFVFLAICVVIML) (removed in mature form).

This sequence belongs to the HYR1/IFF family. In terms of processing, the GPI-anchor is attached to the protein in the endoplasmic reticulum and serves to target the protein to the cell surface. There, the glucosamine-inositol phospholipid moiety is cleaved off and the GPI-modified mannoprotein is covalently attached via its lipidless GPI glycan remnant to the 1,6-beta-glucan of the outer cell wall layer.

Its subcellular location is the secreted. It is found in the cell wall. The protein localises to the membrane. In terms of biological role, GPI-anchored cell wall protein involved in cell wall organization, hyphal growth, as well as in host-fungal interaction and virulence. This chain is Hyphally regulated cell wall protein 4 (HYR4), found in Candida albicans (strain SC5314 / ATCC MYA-2876) (Yeast).